The primary structure comprises 725 residues: Heme/hemopexin utilization protein C (725 aa).

The N-terminal stretch at 1-21 (MRFSKLSLAIATTLVTANALA) is a signal peptide. Residues 36–147 (DPSRFAYTPE…LGGVVAMRTP (112 aa)) form the TBDR plug domain. The TBDR beta-barrel domain occupies 158 to 725 (KFGVKIRQGY…NAKISAVYSF (568 aa)). Residues 708-725 (SLMEGTGRNAKISAVYSF) carry the TonB C-terminal box motif.

The protein belongs to the TonB-dependent receptor family.

Its subcellular location is the cell outer membrane. Required for utilization of free heme at low concentrations. In Haemophilus influenzae, this protein is Heme/hemopexin utilization protein C (hxuC).